A 251-amino-acid chain; its full sequence is MASEQENTADFGFRTVARDEKEVMVAEVFHSVAAKYDLMNDLMSFGIHRIWKRFTIECSGVRRNQRVLDLAGGTGDLTAKFSRMVGEGGEVILADINASMLKVGREKLRNKGIIDNISYVQANAEALPFPDDFFDCITISFGLRNVTDKNKALRSMYRVLKPGGRLLVLEFSKPIIKQLSTVYDAYSFHILPRIGEAVASDAGSYRYLAESIRMHPDQETLKGMMSDAGFDSVNYFNLTGGIVALHRGFKF.

S-adenosyl-L-methionine-binding positions include threonine 74, aspartate 95, 123 to 124 (NA), and serine 140.

It belongs to the class I-like SAM-binding methyltransferase superfamily. MenG/UbiE family.

It catalyses the reaction a 2-demethylmenaquinol + S-adenosyl-L-methionine = a menaquinol + S-adenosyl-L-homocysteine + H(+). It carries out the reaction a 2-methoxy-6-(all-trans-polyprenyl)benzene-1,4-diol + S-adenosyl-L-methionine = a 5-methoxy-2-methyl-3-(all-trans-polyprenyl)benzene-1,4-diol + S-adenosyl-L-homocysteine + H(+). It participates in quinol/quinone metabolism; menaquinone biosynthesis; menaquinol from 1,4-dihydroxy-2-naphthoate: step 2/2. The protein operates within cofactor biosynthesis; ubiquinone biosynthesis. In terms of biological role, methyltransferase required for the conversion of demethylmenaquinol (DMKH2) to menaquinol (MKH2) and the conversion of 2-polyprenyl-6-methoxy-1,4-benzoquinol (DDMQH2) to 2-polyprenyl-3-methyl-6-methoxy-1,4-benzoquinol (DMQH2). The sequence is that of Ubiquinone/menaquinone biosynthesis C-methyltransferase UbiE from Pectobacterium carotovorum subsp. carotovorum (strain PC1).